A 24-amino-acid polypeptide reads, in one-letter code: Ascaphin-5 (24 aa).

Expressed by the skin glands.

Its subcellular location is the secreted. In terms of biological role, antimicrobial peptide. Synthetic peptide shows higher potency against Gram-negative bacteria than against Gram-positive bacteria. Has a very week hemolytic activity. The polypeptide is Ascaphin-5 (Ascaphus truei (Coastal tailed frog)).